A 179-amino-acid polypeptide reads, in one-letter code: Large ribosomal subunit protein uL6 (179 aa).

It belongs to the universal ribosomal protein uL6 family. Part of the 50S ribosomal subunit.

This protein binds to the 23S rRNA, and is important in its secondary structure. It is located near the subunit interface in the base of the L7/L12 stalk, and near the tRNA binding site of the peptidyltransferase center. The sequence is that of Large ribosomal subunit protein uL6 from Chlorobaculum tepidum (strain ATCC 49652 / DSM 12025 / NBRC 103806 / TLS) (Chlorobium tepidum).